An 80-amino-acid chain; its full sequence is Defensin-like protein 1 (80 aa).

The signal sequence occupies residues 1-29 (MAKFASIIALLFAALVLFAAFEAPTMVEA). Pyrrolidone carboxylic acid is present on glutamine 30. Disulfide bonds link cysteine 33/cysteine 80, cysteine 44/cysteine 65, cysteine 50/cysteine 74, and cysteine 54/cysteine 76.

It belongs to the DEFL family. In terms of assembly, forms oligomers in its native state.

Its subcellular location is the secreted. Possesses antifungal activity sensitive to inorganic cations. In Raphanus sativus (Radish), this protein is Defensin-like protein 1 (AFP1).